The following is a 333-amino-acid chain: MMRDFVSEEKLKLLFEKYYRSTDIDPPALITKREVGFMTFEGEIIRHMHLSNKFELNNMLRTTVPRHVYSSAAYYKKPDEKKMPEKIWEGADLIFDLDSDHLPGAEKMTYEEMLNSIKEQTKRLVNKFLVSDLGISEKDIRIYFSGSRGYHVHVSSEDVYPLGSDARREITDYVSGNSLSISVIDKALKTGEKRPGGWIKDVISKLYELGINAEKISQKQIERAIDQVKSHNATMVDAPVTYDIHRLIRMPQSLHGKSGMMVKEVDLDKFDDFDPLSDAIPKIFLEGDYDINVHEKTRKLRLLDYKIDLPPGRNRVPQYVAIFLVSSGRADFL.

Catalysis depends on residues Asp96, Asp98, and Asp237.

It belongs to the eukaryotic-type primase small subunit family. In terms of assembly, heterodimer of a small subunit (PriS) and a large subunit (PriL). The cofactor is Mg(2+). Mn(2+) is required as a cofactor.

In terms of biological role, catalytic subunit of DNA primase, an RNA polymerase that catalyzes the synthesis of short RNA molecules used as primers for DNA polymerase during DNA replication. The small subunit contains the primase catalytic core and has DNA synthesis activity on its own. Binding to the large subunit stabilizes and modulates the activity, increasing the rate of DNA synthesis while decreasing the length of the DNA fragments, and conferring RNA synthesis capability. The DNA polymerase activity may enable DNA primase to also catalyze primer extension after primer synthesis. May also play a role in DNA repair. This is DNA primase small subunit PriS from Thermoplasma volcanium (strain ATCC 51530 / DSM 4299 / JCM 9571 / NBRC 15438 / GSS1).